The primary structure comprises 181 residues: Organelle RRM domain-containing protein 6, chloroplastic (181 aa).

The N-terminal 44 residues, 1 to 44 (MAISLGRVVVPSCTISGDRLFIPNFSAICSVSCGRINVGTGVIS), are a transit peptide targeting the chloroplast. Positions 77–155 (TKLYVSGLSF…RVIFVEEAKT (79 aa)) constitute an RRM domain. Over residues 155 to 169 (TRSDMSRAKPRRDFP) the composition is skewed to basic and acidic residues. The disordered stretch occupies residues 155–181 (TRSDMSRAKPRRDFPKPQSKPRTFRTW).

In terms of assembly, interacts with MORF8/RIP1, MORF2/RIP2, MORF9/RIP9 and VAR3/OZ1.

It is found in the plastid. Its subcellular location is the chloroplast. In terms of biological role, involved in C-to-U editing of chloroplastic RNA. Required for the photosynthetic subunit psbF transcript editing in chloroplast. The chain is Organelle RRM domain-containing protein 6, chloroplastic from Arabidopsis thaliana (Mouse-ear cress).